Reading from the N-terminus, the 147-residue chain is Large ribosomal subunit protein bL9 (147 aa).

It belongs to the bacterial ribosomal protein bL9 family.

In terms of biological role, binds to the 23S rRNA. The sequence is that of Large ribosomal subunit protein bL9 from Clostridium kluyveri (strain NBRC 12016).